Consider the following 260-residue polypeptide: Putative cysteine-rich repeat secretory protein 23 (260 aa).

Residues 1-31 form the signal peptide; sequence MSSSFVYKSLFLVPILAVVAMQLSFVQSVLS. Gnk2-homologous domains are found at residues 38 to 136 and 142 to 254; these read YLHH…NISY and LPEQ…LYLF.

This sequence belongs to the cysteine-rich repeat secretory protein family.

The protein resides in the secreted. This Arabidopsis thaliana (Mouse-ear cress) protein is Putative cysteine-rich repeat secretory protein 23 (CRRSP23).